The sequence spans 101 residues: Putative pterin-4-alpha-carbinolamine dehydratase (101 aa).

This sequence belongs to the pterin-4-alpha-carbinolamine dehydratase family.

It carries out the reaction (4aS,6R)-4a-hydroxy-L-erythro-5,6,7,8-tetrahydrobiopterin = (6R)-L-erythro-6,7-dihydrobiopterin + H2O. The protein is Putative pterin-4-alpha-carbinolamine dehydratase of Nitrobacter hamburgensis (strain DSM 10229 / NCIMB 13809 / X14).